A 502-amino-acid chain; its full sequence is MRNTSRVAILVVIVGALLALTNGFWEGKLLGLFSVLMSCSVIFIALVISLENRKPAQTIAWLAVLGSFPIVGFLFYLLFGRNYWQQRRYKKKADFDEAVLLKFQEPSPIAVERLPMAPHQRPLLRLAYRIGQHPVSLASQTAVLTNGEETFSSIFAELEKAEHHIHLEYYIVRHDEIGQQLKRVLMEKARQGVRVRFLYDAVGSWKLSNAYIEELRAAGVEMIPFSPVRLPFLSNQINFRNHRKIIVIDGGVGFVGGLNIGDEYLGKNKYFGFWRDTHLLIRGEAVRTLQLIFLQDWYYMTGERLLTPDYLSPPLIVEEGQGGVQLIAGGPDQKWEVIKQLYFAMITSAKRSIWVASPYFVPDEDILTALKVAALSGIDVRLLAPKRPDKKIVFYASRSYFPELLEAGVKIYEYEKGFLHSKVIVVDGELASIGTANMDMRSFHLNFEVNAFLYYTDSIHKLVRDFLEDFRHASMIDYEQFQQRPFRVRIAESVSRLLSPLL.

Transmembrane regions (helical) follow at residues 7–27 (VAIL…FWEG), 29–49 (LLGL…LVIS), and 59–79 (IAWL…YLLF). 2 PLD phosphodiesterase domains span residues 237–264 (INFR…GDEY) and 415–442 (EKGF…DMRS). Active-site residues include histidine 242, lysine 244, aspartate 249, histidine 420, lysine 422, and aspartate 427.

It belongs to the phospholipase D family. Cardiolipin synthase subfamily.

The protein resides in the cell membrane. It carries out the reaction 2 a 1,2-diacyl-sn-glycero-3-phospho-(1'-sn-glycerol) = a cardiolipin + glycerol. Functionally, catalyzes the reversible phosphatidyl group transfer from one phosphatidylglycerol molecule to another to form cardiolipin (CL) (diphosphatidylglycerol) and glycerol. The polypeptide is Cardiolipin synthase (cls) (Geobacillus kaustophilus (strain HTA426)).